Consider the following 806-residue polypeptide: Portal protein (806 aa).

The interaction with Cargo protein 1 stretch occupies residues 337-380 (SKRKILKVKSYDPETGEEEWNFYPENYVVNKEAGEEVQSFWVNE). Over residues 783-792 (KKKAETDASI) the composition is skewed to basic and acidic residues. Positions 783–806 (KKKAETDASIKRQALRKKSSTTNK) are disordered. Over residues 795–806 (QALRKKSSTTNK) the composition is skewed to basic residues.

In terms of assembly, homododecamer. Interacts with the Cargo protein 1. Interacts with the major capsid protein.

It is found in the virion. Forms the portal vertex of the capsid. Probably involved in head assembly, genome packaging, tail attachment, and genome ejection. The chain is Portal protein from Bacteroides phage crAss001 (Bacteroides phage PhiCrAss001).